The following is a 494-amino-acid chain: Aspartyl/glutamyl-tRNA(Asn/Gln) amidotransferase subunit B (494 aa).

Belongs to the GatB/GatE family. GatB subfamily. In terms of assembly, heterotrimer of A, B and C subunits.

It carries out the reaction L-glutamyl-tRNA(Gln) + L-glutamine + ATP + H2O = L-glutaminyl-tRNA(Gln) + L-glutamate + ADP + phosphate + H(+). It catalyses the reaction L-aspartyl-tRNA(Asn) + L-glutamine + ATP + H2O = L-asparaginyl-tRNA(Asn) + L-glutamate + ADP + phosphate + 2 H(+). Functionally, allows the formation of correctly charged Asn-tRNA(Asn) or Gln-tRNA(Gln) through the transamidation of misacylated Asp-tRNA(Asn) or Glu-tRNA(Gln) in organisms which lack either or both of asparaginyl-tRNA or glutaminyl-tRNA synthetases. The reaction takes place in the presence of glutamine and ATP through an activated phospho-Asp-tRNA(Asn) or phospho-Glu-tRNA(Gln). This chain is Aspartyl/glutamyl-tRNA(Asn/Gln) amidotransferase subunit B, found in Synechococcus sp. (strain CC9605).